An 81-amino-acid polypeptide reads, in one-letter code: Putative chemokine-related protein B42 (81 aa).

Cystine bridges form between C7/C73, C8/C29, and C11/C45.

As to expression, expressed in placenta, heart, lung, liver, pancreas, skeletal muscle and brain.

It localises to the cytoplasm. This chain is Putative chemokine-related protein B42, found in Homo sapiens (Human).